A 260-amino-acid chain; its full sequence is DNA repair protein RecO (260 aa).

The interval 239–260 is disordered; that stretch reads SAGVAAARKAGGDGSDGDEGEQ.

The protein belongs to the RecO family.

Involved in DNA repair and RecF pathway recombination. The protein is DNA repair protein RecO of Sodalis glossinidius (strain morsitans).